The chain runs to 119 residues: Amicyanin-alpha (119 aa).

The N-terminal stretch at methionine 1–alanine 20 is a signal peptide. A Plastocyanin-like domain is found at alanine 21–glutamate 119. Cu cation contacts are provided by histidine 67, cysteine 106, histidine 109, and methionine 112.

It depends on Cu cation as a cofactor.

It localises to the periplasm. It functions in the pathway one-carbon metabolism; methylamine degradation. Functionally, primary acceptor of electrons from methylamine dehydrogenase. Passes those electrons on either a soluble cytochrome c or to pseudoazurin. This Methylorubrum extorquens (strain ATCC 14718 / DSM 1338 / JCM 2805 / NCIMB 9133 / AM1) (Methylobacterium extorquens) protein is Amicyanin-alpha (mauC).